We begin with the raw amino-acid sequence, 146 residues long: Metallothiol transferase FosB (146 aa).

The VOC domain occupies G4–G120. Mg(2+)-binding residues include H7, H66, and E116. The active-site Proton donor/acceptor is E116.

Belongs to the fosfomycin resistance protein family. FosB subfamily. In terms of assembly, homodimer. Mg(2+) is required as a cofactor.

It is found in the cytoplasm. Functionally, metallothiol transferase which confers resistance to fosfomycin by catalyzing the addition of a thiol cofactor to fosfomycin. L-cysteine is probably the physiological thiol donor. The sequence is that of Metallothiol transferase FosB from Shouchella clausii (strain KSM-K16) (Alkalihalobacillus clausii).